We begin with the raw amino-acid sequence, 180 residues long: ATP synthase subunit delta (180 aa).

This sequence belongs to the ATPase delta chain family. In terms of assembly, F-type ATPases have 2 components, F(1) - the catalytic core - and F(0) - the membrane proton channel. F(1) has five subunits: alpha(3), beta(3), gamma(1), delta(1), epsilon(1). F(0) has three main subunits: a(1), b(2) and c(10-14). The alpha and beta chains form an alternating ring which encloses part of the gamma chain. F(1) is attached to F(0) by a central stalk formed by the gamma and epsilon chains, while a peripheral stalk is formed by the delta and b chains.

It is found in the cell membrane. Its function is as follows. F(1)F(0) ATP synthase produces ATP from ADP in the presence of a proton or sodium gradient. F-type ATPases consist of two structural domains, F(1) containing the extramembraneous catalytic core and F(0) containing the membrane proton channel, linked together by a central stalk and a peripheral stalk. During catalysis, ATP synthesis in the catalytic domain of F(1) is coupled via a rotary mechanism of the central stalk subunits to proton translocation. In terms of biological role, this protein is part of the stalk that links CF(0) to CF(1). It either transmits conformational changes from CF(0) to CF(1) or is implicated in proton conduction. This chain is ATP synthase subunit delta, found in Enterococcus hirae (strain ATCC 9790 / DSM 20160 / JCM 8729 / LMG 6399 / NBRC 3181 / NCIMB 6459 / NCDO 1258 / NCTC 12367 / WDCM 00089 / R).